The primary structure comprises 334 residues: Anthranilate phosphoribosyltransferase (334 aa).

5-phospho-alpha-D-ribose 1-diphosphate is bound by residues Gly79, 82–83 (GD), Ser87, 89–92 (NIST), 107–115 (KHGNRSISS), and Ser119. Gly79 provides a ligand contact to anthranilate. Ser91 contributes to the Mg(2+) binding site. Asn110 serves as a coordination point for anthranilate. Arg165 contacts anthranilate. Mg(2+) is bound by residues Asp224 and Glu225.

Belongs to the anthranilate phosphoribosyltransferase family. As to quaternary structure, homodimer. Mg(2+) serves as cofactor.

The catalysed reaction is N-(5-phospho-beta-D-ribosyl)anthranilate + diphosphate = 5-phospho-alpha-D-ribose 1-diphosphate + anthranilate. Its pathway is amino-acid biosynthesis; L-tryptophan biosynthesis; L-tryptophan from chorismate: step 2/5. Catalyzes the transfer of the phosphoribosyl group of 5-phosphorylribose-1-pyrophosphate (PRPP) to anthranilate to yield N-(5'-phosphoribosyl)-anthranilate (PRA). The sequence is that of Anthranilate phosphoribosyltransferase from Streptococcus gordonii (strain Challis / ATCC 35105 / BCRC 15272 / CH1 / DL1 / V288).